A 547-amino-acid chain; its full sequence is Chaperonin GroEL (547 aa).

ATP contacts are provided by residues Thr29 to Pro32, Lys50, Asp86 to Thr90, Gly414, Asn478 to Ala480, and Asp494.

Belongs to the chaperonin (HSP60) family. As to quaternary structure, forms a cylinder of 14 subunits composed of two heptameric rings stacked back-to-back. Interacts with the co-chaperonin GroES.

The protein resides in the cytoplasm. It catalyses the reaction ATP + H2O + a folded polypeptide = ADP + phosphate + an unfolded polypeptide.. In terms of biological role, together with its co-chaperonin GroES, plays an essential role in assisting protein folding. The GroEL-GroES system forms a nano-cage that allows encapsulation of the non-native substrate proteins and provides a physical environment optimized to promote and accelerate protein folding. The sequence is that of Chaperonin GroEL from Saccharophagus degradans (strain 2-40 / ATCC 43961 / DSM 17024).